The following is a 297-amino-acid chain: ABSCISIC ACID-INSENSITIVE 5-like protein 2 (297 aa).

3 positions are modified to phosphoserine: S21, S43, and S81. 2 disordered regions span residues I100–L119 and I138–G157. Residue T118 is modified to Phosphothreonine. The segment covering P146–G157 has biased composition (gly residues). The 64-residue stretch at V225–Q288 folds into the bZIP domain. A basic motif region spans residues R227 to K246. Residues L253–L267 form a leucine-zipper region. Residues E272–F297 are disordered.

Belongs to the bZIP family. ABI5 subfamily. As to quaternary structure, DNA-binding heterodimer with ABI5/DPBF1, DPBF2 or EEL/DPBF4. Interacts with the AFP proteins AFP1, AFP2, AFP3 and AFP4. Predominantly expressed in seeds.

It is found in the nucleus. In terms of biological role, binds to the embryo specification element and the ABA-responsive element (ABRE) of the Dc3 gene promoter. Could participate in abscisic acid-regulated gene expression during seed development. The chain is ABSCISIC ACID-INSENSITIVE 5-like protein 2 (DPBF3) from Arabidopsis thaliana (Mouse-ear cress).